The primary structure comprises 313 residues: Esterase mpl1 (313 aa).

Catalysis depends on charge relay system residues serine 174, aspartate 259, and histidine 287.

Belongs to the LovG family.

It participates in mycotoxin biosynthesis. In terms of biological role, esterase; part of the gene cluster that mediates the biosynthesis of the mycotoxin citrinin, a hepato-nephrotoxic compound to humans due to inhibition of respiration complex III. The pathway begins with the synthesis of a keto-aldehyde intermediate by the citrinin PKS (pksCT) from successive condensations of 4 malonyl-CoA units, presumably with a simple acetyl-CoA starter unit. Release of the keto-aldehyde intermediate is consistent with the presence of the C-terminal reductive release domain. Mp11 collaborates with pksCT by catalyzing the hydrolysis of ACP-bound acyl intermediates to free the ACP from stalled intermediates. Mpl2 then catalyzes the oxidation of the C-12 methyl of the ketone intermediate to an alcohol intermediate which is further oxidized by the oxidoreductase mpl7 to produce a bisaldehyde intermediate. The fourth catalytic step is catalyzed by the mpl4 aldehyde dehydrogenase. The final transformation is the reduction of C-3 by mpl6 to provide the chemically stable citrinin nucleus. The sequence is that of Esterase mpl1 from Monascus purpureus (Red mold).